Consider the following 189-residue polypeptide: Anthranilate synthase component 2 (189 aa).

The region spanning 1-189 (MILIIDNYDS…QLLRNFLEYS (189 aa)) is the Glutamine amidotransferase type-1 domain. 52–54 (GPG) is an L-glutamine binding site. Cys-79 functions as the Nucleophile; for GATase activity in the catalytic mechanism. L-glutamine is bound by residues Gln-83 and 129 to 130 (SL). Residues His-169 and Glu-171 contribute to the active site.

As to quaternary structure, tetramer of two components I and two components II.

The protein localises to the plastid. The protein resides in the chloroplast. It carries out the reaction chorismate + L-glutamine = anthranilate + pyruvate + L-glutamate + H(+). Its pathway is amino-acid biosynthesis; L-tryptophan biosynthesis; L-tryptophan from chorismate: step 1/5. This chain is Anthranilate synthase component 2 (trpG), found in Pyropia yezoensis (Susabi-nori).